Consider the following 312-residue polypeptide: Protoheme IX farnesyltransferase (312 aa).

8 helical membrane-spanning segments follow: residues 31-51 (VMSL…GSFH), 52-72 (PVLA…AGAL), 119-139 (ILVN…YVVI), 152-172 (IVIG…SVTG), 179-199 (ILLF…LALF), 225-245 (ILLY…LGYF), 247-267 (VIYG…AVRV), and 288-308 (ILYL…AAVL).

It belongs to the UbiA prenyltransferase family. Protoheme IX farnesyltransferase subfamily.

Its subcellular location is the cell inner membrane. It carries out the reaction heme b + (2E,6E)-farnesyl diphosphate + H2O = Fe(II)-heme o + diphosphate. The protein operates within porphyrin-containing compound metabolism; heme O biosynthesis; heme O from protoheme: step 1/1. Converts heme B (protoheme IX) to heme O by substitution of the vinyl group on carbon 2 of heme B porphyrin ring with a hydroxyethyl farnesyl side group. The sequence is that of Protoheme IX farnesyltransferase from Rhodopseudomonas palustris (strain ATCC BAA-98 / CGA009).